We begin with the raw amino-acid sequence, 820 residues long: DNA gyrase subunit A (820 aa).

In terms of domain architecture, Topo IIA-type catalytic spans 31-496 (IPDVRDGLKP…TLTNIEIEDL (466 aa)). Residue Y119 is the O-(5'-phospho-DNA)-tyrosine intermediate of the active site. Positions 523 to 529 (QRRGGKG) match the GyrA-box motif.

It belongs to the type II topoisomerase GyrA/ParC subunit family. As to quaternary structure, heterotetramer, composed of two GyrA and two GyrB chains. In the heterotetramer, GyrA contains the active site tyrosine that forms a transient covalent intermediate with DNA, while GyrB binds cofactors and catalyzes ATP hydrolysis.

The protein localises to the cytoplasm. It catalyses the reaction ATP-dependent breakage, passage and rejoining of double-stranded DNA.. Functionally, a type II topoisomerase that negatively supercoils closed circular double-stranded (ds) DNA in an ATP-dependent manner to modulate DNA topology and maintain chromosomes in an underwound state. Negative supercoiling favors strand separation, and DNA replication, transcription, recombination and repair, all of which involve strand separation. Also able to catalyze the interconversion of other topological isomers of dsDNA rings, including catenanes and knotted rings. Type II topoisomerases break and join 2 DNA strands simultaneously in an ATP-dependent manner. The polypeptide is DNA gyrase subunit A (Lawsonia intracellularis (strain PHE/MN1-00)).